The chain runs to 136 residues: Cytochrome b5 (136 aa).

Residues 5–81 form the Cytochrome b5 heme-binding domain; that stretch reads TKVFTLAEVS…LDEYYVGDID (77 aa). Residues His-40 and His-64 each contribute to the heme site. Residues 107-127 traverse the membrane as a helical segment; sequence FVVKLLQFLVPLIILGVAFGI.

The protein belongs to the cytochrome b5 family. In terms of tissue distribution, is highly expressed in developing seeds, moderately expressed in flowers, and is expressed at low levels in the leaf.

The protein localises to the endoplasmic reticulum membrane. The protein resides in the microsome membrane. Functionally, cytochrome b5 is a membrane bound hemoprotein which function as an electron carrier for several membrane bound oxygenases. May play a key role in the modification by desaturation of fatty acids in the endoplasmic reticulum, which in the developing seed is utilized for membrane synthesis and in the developmentally regulated production of large amounts of storage lipids. Is involved in the reduction of cytochrome P-450 and may therefore be involved in flavonoid biosynthesis in the petals. The protein is Cytochrome b5 of Nicotiana tabacum (Common tobacco).